The chain runs to 905 residues: MQSIKKVIGSIDFGILSPQEIRKMSAAEITVPDTYDEDGYPIEGGLMDKRLGVIDPGLRCETCGARAGECPGHFGHVELARPVIHVGFAKTIHRVLESTCRECGRIKLTDEEIEEYFHKFEVTGNRKKAKDRLIKEIHKKAKERMVCPHCGSPQFPIKFERPTVYWELRKDEEGNEYKHRMMPSEVRDRLEKIPDRDLPLIGLDAEKARPEWMVLTVLPVPPVTMRPSITLESGIRAEDDLTHKLVDIIRINNRLKSNIEAGAPQLIIEDLWDLLQYHVTTYINNETSGIPPAKHKSGRPLKTLSQRLKGKEGRFRGNLSGKRVNFSARTVISPDPMISINEVGVPMAIAMELTVPEKVTEFNFEKLRKMVLNGPEKYPGANYVIDPEGRRIRLMENNLETVAEKLDIGWTVERHLLDGDVVLFNRQPSLHRMSIMAHRVRVMPYRTFRLNLSVCPPYNADFDGDEMNLHVPQTEEAQAEAKILMEVQNHIISPRYGGPLIAGIQDHISGGYLLTREGAYFERTEVEQMLMFAGVDVDRLPEPDKVENGVELWSGKTIFSLLLPKDLTIWYRNKLCDEPGRCEALEKLIEEKLIPDEEEVRALAYDGFTYILNGKLLSGAIDKTAYGREDGKLLDIIVREYGVERARQFLDQVTKLAIWVITHKGFTTAIDDEDLPTEALDRIREIIREAEERVNRLIEAYRNGELEPIPGKTLEETLESKIMAALAEARDNAGKVAERYLGMSNHAVIMAKTGARGKILNITQMAAMLGQQSIRGKRLYRGYRERVLTHFKPGDLGARARGFVINSYKSGLTPQEYFFHAMGGREGLVDTAVRTAQSGYMQRRLINALQDLKVEYDGTVRDPTGIIVQFRYGEDGIDPMRSWKGKTIDVNRVVLRTLLKLRGKG.

Zn(2+) is bound by residues C60, C63, C70, H73, C100, C103, C147, and C150. Mg(2+) is bound by residues D461, D463, and D465.

This sequence belongs to the RNA polymerase beta' chain family. Part of the RNA polymerase complex. Mg(2+) is required as a cofactor. Zn(2+) serves as cofactor.

Its subcellular location is the cytoplasm. The enzyme catalyses RNA(n) + a ribonucleoside 5'-triphosphate = RNA(n+1) + diphosphate. In terms of biological role, DNA-dependent RNA polymerase (RNAP) catalyzes the transcription of DNA into RNA using the four ribonucleoside triphosphates as substrates. Forms the clamp head domain. The protein is DNA-directed RNA polymerase subunit Rpo1N of Thermococcus celer.